A 302-amino-acid polypeptide reads, in one-letter code: Rab effector Noc2 (302 aa).

Residues 41 to 158 enclose the RabBD domain; the sequence is QRRSQCLSPG…KRSGAWFYKG (118 aa). The FYVE-type zinc finger occupies 89-146; sequence GNGLSQCLLCGEVLGFLGSSSVFCKDCRKKVCTKCGIEASPGQKRPLWLCKICSEQRE. Zn(2+)-binding residues include Cys95, Cys98, Cys112, Cys115, Cys120, Cys123, Cys138, and Cys141. Residues 174–302 form a disordered region; that stretch reads DPHFRPLPVE…KRHTWATPRY (129 aa). Polar residues predominate over residues 185–197; it reads TETQPPSAETSRV. Ser248 is modified (phosphoserine). Residues 258–269 are compositionally biased toward low complexity; the sequence is SHLSGSQSSLGS.

In terms of assembly, recruited to dense-core vesicles through specific interaction with RAB27A in endocrine cells. Interacts with RAB3A, RAB3B, RAB3C and RAB3D. Interacts with ZYX. As to expression, highly expressed in pancreatic islets. High to moderate expression in adrenal gland, pituitary gland and ovary.

The protein resides in the cytoplasm. Its subcellular location is the cytoplasmic vesicle. It is found in the secretory vesicle membrane. Its function is as follows. Rab GTPase effector involved in the late steps of regulated exocytosis, both in endocrine and exocrine cells. Regulates the exocytosis of dense-core vesicles in neuroendocrine cells through interaction with RAB27A. Acts as a potential RAB3B effector protein in epithelial cells. This Mus musculus (Mouse) protein is Rab effector Noc2 (Rph3al).